A 556-amino-acid chain; its full sequence is 2-succinyl-5-enolpyruvyl-6-hydroxy-3-cyclohexene-1-carboxylate synthase (556 aa).

Belongs to the TPP enzyme family. MenD subfamily. Homodimer. Mg(2+) serves as cofactor. Mn(2+) is required as a cofactor. It depends on thiamine diphosphate as a cofactor.

The enzyme catalyses isochorismate + 2-oxoglutarate + H(+) = 5-enolpyruvoyl-6-hydroxy-2-succinyl-cyclohex-3-ene-1-carboxylate + CO2. It participates in quinol/quinone metabolism; 1,4-dihydroxy-2-naphthoate biosynthesis; 1,4-dihydroxy-2-naphthoate from chorismate: step 2/7. Its pathway is quinol/quinone metabolism; menaquinone biosynthesis. Functionally, catalyzes the thiamine diphosphate-dependent decarboxylation of 2-oxoglutarate and the subsequent addition of the resulting succinic semialdehyde-thiamine pyrophosphate anion to isochorismate to yield 2-succinyl-5-enolpyruvyl-6-hydroxy-3-cyclohexene-1-carboxylate (SEPHCHC). This is 2-succinyl-5-enolpyruvyl-6-hydroxy-3-cyclohexene-1-carboxylate synthase from Salmonella typhi.